The primary structure comprises 442 residues: Glutamyl-tRNA(Gln) amidotransferase subunit A (442 aa).

Active-site charge relay system residues include Lys-50 and Ser-125. The active-site Acyl-ester intermediate is the Ser-149.

It belongs to the amidase family. GatA subfamily. Heterotrimer of A, B and C subunits.

It catalyses the reaction L-glutamyl-tRNA(Gln) + L-glutamine + ATP + H2O = L-glutaminyl-tRNA(Gln) + L-glutamate + ADP + phosphate + H(+). Allows the formation of correctly charged Gln-tRNA(Gln) through the transamidation of misacylated Glu-tRNA(Gln) in organisms which lack glutaminyl-tRNA synthetase. The reaction takes place in the presence of glutamine and ATP through an activated gamma-phospho-Glu-tRNA(Gln). The chain is Glutamyl-tRNA(Gln) amidotransferase subunit A from Nitratiruptor sp. (strain SB155-2).